The chain runs to 303 residues: NmrA-like family domain-containing oxidoreductase FVEG_08287 (303 aa).

NADP(+) contacts are provided by residues 8-13, 8-14, 36-39, Arg37, 56-57, 77-79, and 159-162; these read LGAGEL, LGAGELG, LRPS, QG, IFR, and FMSF.

Belongs to the NmrA-type oxidoreductase family.

NmrA-like family domain-containing oxidoreductase; part of the Fusarium detoxification of benzoxazolinone cluster 1 (FDB1) involved in the degradation of benzoxazolinones produced by the host plant. Maize, wheat, and rye produce the 2 benzoxazinone phytoanticipins 2,4-dihy-droxy-7-methoxy-1,4-benzoxazin-3-one (DIMBOA) and 2,4-dihydroxy-1,4-benzoxazin-3-one (DIBOA) that, due to their inherent instability once released, spontaneously degrade to the more stable corresponding benzoxazolinones, 6-methoxy-2-benzoxazolinone (MBOA) and 2-benzoxazolinone (BOA), respectively. The first step in the detoxification of benzoxazolinones involves the hydrolysis of the cyclic ester bond of benzoxazolinones by the FDB1 cluster gamma-lactamase MBL1 to aminophenols. MBL1 is able to convert BOA into 2-aminophenol (2-AP), as well as MBOA into 5-methoxy-2-aminophenol (2-AMP). The FDB2 cluster N-malonyltransferase FDB2/NAT1 then metabolizes aminophenols via N-malonylation to non-toxic malonamic acids. FDB2/NAT1 converts 2-AP into N-(2-hydroxyphenyl) malonamic acid (HPMA) and 2-AMP into N-(2-hydroxy-4-methoxyphenyl) malonamic acid (HMPMA). The duplicated dienlactone hydrolases DLH1 and DLH2 may provide redundant function for hydrolyzing the lactone moiety in the BOA molecule. The roles of the amidases an other enzymes encoded by the 2 FDB clusters have not been identified so far. The chain is NmrA-like family domain-containing oxidoreductase FVEG_08287 from Gibberella moniliformis (strain M3125 / FGSC 7600) (Maize ear and stalk rot fungus).